The following is a 128-amino-acid chain: Flagellar assembly factor FliW (128 aa).

The protein belongs to the FliW family. Interacts with translational regulator CsrA and flagellin(s).

Its subcellular location is the cytoplasm. Acts as an anti-CsrA protein, binds CsrA and prevents it from repressing translation of its target genes, one of which is flagellin. Binds to flagellin and participates in the assembly of the flagellum. This Campylobacter fetus subsp. fetus (strain 82-40) protein is Flagellar assembly factor FliW.